The sequence spans 379 residues: Oxidoreductase chry3 (379 aa).

2 disordered regions span residues 1-23 and 126-150; these read MTTA…QPTP and EGDD…TSHM. Positions 126–138 are enriched in acidic residues; the sequence is EGDDSAPAEEEAD.

The protein belongs to the asaB hydroxylase/desaturase family.

It participates in pigment biosynthesis. Oxidoreductase; part of the gene cluster that mediates the biosynthesis of the yellow pigment chrysogine. Pyruvic acid and anthranilic acid are likely substrates for the nonribosomal peptide synthetase chry1/NRPS14, with pyruvic acid adenylated by the first A domain and anthranilic acid by the second. If pyruvic acid and anthranilic acid are merged and released from chry1/NRPS14 by hydrolysis, a subsequent amidation would lead to 2-pyruvoylaminobenzamide. This process is probably catalyzed by the amidotransferase chry2 using glutamine as amino donor. The dehydrogenase chry5 that has a terminal berberine bridge domain for C-N cyclization could catalyze the cyclization of 2-pyruvoylaminobenzamide to yield acetyl-4(3H)-quinazolidinone. A final reduction of acetyl-4(3H)-quinazolidinone catalyzed by the oxidoreductase chry4 would result in chrysogine. The sequence is that of Oxidoreductase chry3 from Gibberella zeae (strain ATCC MYA-4620 / CBS 123657 / FGSC 9075 / NRRL 31084 / PH-1) (Wheat head blight fungus).